The following is a 171-amino-acid chain: S-ribosylhomocysteine lyase (171 aa).

Residues H54, H58, and C128 each contribute to the Fe cation site.

It belongs to the LuxS family. Homodimer. The cofactor is Fe cation.

It catalyses the reaction S-(5-deoxy-D-ribos-5-yl)-L-homocysteine = (S)-4,5-dihydroxypentane-2,3-dione + L-homocysteine. Functionally, involved in the synthesis of autoinducer 2 (AI-2) which is secreted by bacteria and is used to communicate both the cell density and the metabolic potential of the environment. The regulation of gene expression in response to changes in cell density is called quorum sensing. Catalyzes the transformation of S-ribosylhomocysteine (RHC) to homocysteine (HC) and 4,5-dihydroxy-2,3-pentadione (DPD). The protein is S-ribosylhomocysteine lyase of Shigella flexneri.